The chain runs to 131 residues: Flagellar assembly factor FliW (131 aa).

Belongs to the FliW family. In terms of assembly, interacts with translational regulator CsrA and flagellin(s).

The protein resides in the cytoplasm. Acts as an anti-CsrA protein, binds CsrA and prevents it from repressing translation of its target genes, one of which is flagellin. Binds to flagellin and participates in the assembly of the flagellum. The polypeptide is Flagellar assembly factor FliW (Campylobacter lari (strain RM2100 / D67 / ATCC BAA-1060)).